Here is a 114-residue protein sequence, read N- to C-terminus: UPF0342 protein SERP1381 (114 aa).

Belongs to the UPF0342 family.

The protein is UPF0342 protein SERP1381 of Staphylococcus epidermidis (strain ATCC 35984 / DSM 28319 / BCRC 17069 / CCUG 31568 / BM 3577 / RP62A).